Here is a 138-residue protein sequence, read N- to C-terminus: Acidic phospholipase A2 ammodytin I1 (138 aa).

An N-terminal signal peptide occupies residues 1-16 (MRILWIVAVCLIGAEG). 7 disulfides stabilise this stretch: C42–C131, C44–C60, C59–C111, C65–C138, C66–C104, C73–C97, and C91–C102. The Ca(2+) site is built by Y43, G45, and G47. H63 is an active-site residue. D64 provides a ligand contact to Ca(2+). D105 is an active-site residue.

This sequence belongs to the phospholipase A2 family. Group II subfamily. D49 sub-subfamily. It depends on Ca(2+) as a cofactor. As to expression, expressed by the venom gland.

Its subcellular location is the secreted. It carries out the reaction a 1,2-diacyl-sn-glycero-3-phosphocholine + H2O = a 1-acyl-sn-glycero-3-phosphocholine + a fatty acid + H(+). In terms of biological role, snake venom phospholipase A2 (PLA2) that has enzymatic activity but is non-toxic. PLA2 catalyzes the calcium-dependent hydrolysis of the 2-acyl groups in 3-sn-phosphoglycerides. The sequence is that of Acidic phospholipase A2 ammodytin I1 from Vipera ammodytes ammodytes (Western sand viper).